Consider the following 85-residue polypeptide: Toxin BmKa3 (85 aa).

The N-terminal stretch at 1 to 19 (MNYLVFFSLALLLMTGVES) is a signal peptide. The region spanning 21–83 (RDGYIADDKN…VPIRVPGKCN (63 aa)) is the LCN-type CS-alpha/beta domain. 4 cysteine pairs are disulfide-bonded: Cys31/Cys82, Cys35/Cys55, Cys41/Cys65, and Cys45/Cys67.

It belongs to the long (4 C-C) scorpion toxin superfamily. Sodium channel inhibitor family. Alpha subfamily. In terms of tissue distribution, expressed by the venom gland.

It is found in the secreted. Functionally, alpha toxins bind voltage-independently at site-3 of sodium channels (Nav) and inhibit the inactivation of the activated channels, thereby blocking neuronal transmission. The sequence is that of Toxin BmKa3 from Olivierus martensii (Manchurian scorpion).